The chain runs to 379 residues: Probable leucine aminopeptidase ARB_01443 (379 aa).

A signal peptide spans 1–18; sequence MKIATLAVVSAFAATAIA. Residues His-182 and Asp-201 each coordinate Zn(2+). N-linked (GlcNAc...) asparagine glycosylation is found at Asn-202 and Asn-226. Glu-240 and Asp-267 together coordinate Zn(2+). Cysteines 312 and 316 form a disulfide. Residue His-345 participates in Zn(2+) binding.

The protein belongs to the peptidase M28 family. M28E subfamily. Monomer. The cofactor is Zn(2+).

It localises to the secreted. Probable extracellular aminopeptidase which contributes to pathogenicity. This Arthroderma benhamiae (strain ATCC MYA-4681 / CBS 112371) (Trichophyton mentagrophytes) protein is Probable leucine aminopeptidase ARB_01443.